A 409-amino-acid chain; its full sequence is Argininosuccinate synthase (409 aa).

Residues 16–24 (AYSGGLDTS) and Ala-44 contribute to the ATP site. Tyr-96 and Ser-101 together coordinate L-citrulline. Residue Gly-126 participates in ATP binding. L-aspartate-binding residues include Thr-128, Asn-132, and Asp-133. L-citrulline is bound at residue Asn-132. Residues Arg-136, Ser-185, Ser-194, Glu-270, and Tyr-282 each coordinate L-citrulline.

This sequence belongs to the argininosuccinate synthase family. Type 1 subfamily. Homotetramer.

The protein localises to the cytoplasm. The enzyme catalyses L-citrulline + L-aspartate + ATP = 2-(N(omega)-L-arginino)succinate + AMP + diphosphate + H(+). The protein operates within amino-acid biosynthesis; L-arginine biosynthesis; L-arginine from L-ornithine and carbamoyl phosphate: step 2/3. This is Argininosuccinate synthase from Shewanella piezotolerans (strain WP3 / JCM 13877).